The following is a 101-amino-acid chain: Apolipoprotein C-II (101 aa).

The signal sequence occupies residues 1–22 (MGTRFLLALCLVLLVLGFEVQG). A propeptide spans 23-28 (AQLPQQ) (removed in mature form). Residues 66–74 (AVDEKLRDL) are lipid binding. The lipoprotein lipase cofactor stretch occupies residues 78–101 (STAAMSTYTGIFTDQVLSVLKGEE).

It belongs to the apolipoprotein C2 family. Post-translationally, proapolipoprotein C-II is synthesized as a sialic acid containing glycoprotein which is subsequently desialylated prior to its proteolytic processing. In terms of processing, proapolipoprotein C-II, the major form found in plasma undergoes proteolytic cleavage of its N-terminal hexapeptide to generate apolipoprotein C-II, which occurs as the minor form in plasma.

The protein localises to the secreted. Its function is as follows. Component of chylomicrons, very low-density lipoproteins (VLDL), low-density lipoproteins (LDL), and high-density lipoproteins (HDL) in plasma. Plays an important role in lipoprotein metabolism as an activator of lipoprotein lipase. Both proapolipoprotein C-II and apolipoprotein C-II can activate lipoprotein lipase. In Papio anubis (Olive baboon), this protein is Apolipoprotein C-II (APOC2).